A 226-amino-acid chain; its full sequence is Triosephosphate isomerase (226 aa).

10 to 12 (NFK) contributes to the substrate binding site. The Electrophile role is filled by H96. E144 serves as the catalytic Proton acceptor. Residues I149, G184, and 205-206 (AS) contribute to the substrate site.

Belongs to the triosephosphate isomerase family. In terms of assembly, homotetramer; dimer of dimers.

It localises to the cytoplasm. It catalyses the reaction D-glyceraldehyde 3-phosphate = dihydroxyacetone phosphate. The protein operates within carbohydrate biosynthesis; gluconeogenesis. Its pathway is carbohydrate degradation; glycolysis; D-glyceraldehyde 3-phosphate from glycerone phosphate: step 1/1. Its function is as follows. Involved in the gluconeogenesis. Catalyzes stereospecifically the conversion of dihydroxyacetone phosphate (DHAP) to D-glyceraldehyde-3-phosphate (G3P). The chain is Triosephosphate isomerase from Methanopyrus kandleri (strain AV19 / DSM 6324 / JCM 9639 / NBRC 100938).